Consider the following 254-residue polypeptide: tRNA (guanine-N(7)-)-methyltransferase (254 aa).

The interval 1-34 (MNTNTPAHPPEGAPLSEATQAALASAEHAPDSPG) is disordered. Residues E87, E112, D139, and D162 each coordinate S-adenosyl-L-methionine. The active site involves D162. Substrate-binding positions include K166, D198, and 233–236 (TKFE).

Belongs to the class I-like SAM-binding methyltransferase superfamily. TrmB family.

The enzyme catalyses guanosine(46) in tRNA + S-adenosyl-L-methionine = N(7)-methylguanosine(46) in tRNA + S-adenosyl-L-homocysteine. It participates in tRNA modification; N(7)-methylguanine-tRNA biosynthesis. Functionally, catalyzes the formation of N(7)-methylguanine at position 46 (m7G46) in tRNA. The sequence is that of tRNA (guanine-N(7)-)-methyltransferase from Bordetella bronchiseptica (strain ATCC BAA-588 / NCTC 13252 / RB50) (Alcaligenes bronchisepticus).